A 659-amino-acid polypeptide reads, in one-letter code: Acetyl-coenzyme A synthetase (659 aa).

Residues 1-35 form a disordered region; the sequence is MATEQTKGQSSESISSVLSERRKFPPPEAFSSQSH. CoA-binding positions include 205–208, Thr323, and Asn347; that span reads RRGS. Residues 399–401, 423–428, Asp512, and Arg527 contribute to the ATP site; these read GEP and DTWWQT. Ser535 serves as a coordination point for CoA. Arg538 is a binding site for ATP. Mg(2+) is bound by residues Val549, His551, and Val554. Lys621 bears the N6-acetyllysine mark.

This sequence belongs to the ATP-dependent AMP-binding enzyme family. Mg(2+) is required as a cofactor. Acetylated. Deacetylation by the SIR2-homolog deacetylase activates the enzyme.

The enzyme catalyses acetate + ATP + CoA = acetyl-CoA + AMP + diphosphate. In terms of biological role, catalyzes the conversion of acetate into acetyl-CoA (AcCoA), an essential intermediate at the junction of anabolic and catabolic pathways. AcsA undergoes a two-step reaction. In the first half reaction, AcsA combines acetate with ATP to form acetyl-adenylate (AcAMP) intermediate. In the second half reaction, it can then transfer the acetyl group from AcAMP to the sulfhydryl group of CoA, forming the product AcCoA. This chain is Acetyl-coenzyme A synthetase, found in Chlorobaculum tepidum (strain ATCC 49652 / DSM 12025 / NBRC 103806 / TLS) (Chlorobium tepidum).